The sequence spans 236 residues: UPF0257 lipoprotein YnfC (236 aa).

An N-terminal signal peptide occupies residues 1–16; it reads MKYKLLPCLLAIFLTG. Cys17 is lipidated: N-palmitoyl cysteine. Cys17 carries S-diacylglycerol cysteine lipidation.

Belongs to the UPF0257 family.

It is found in the cell membrane. The polypeptide is UPF0257 lipoprotein YnfC (ynfC) (Shigella flexneri).